We begin with the raw amino-acid sequence, 208 residues long: Small ribosomal subunit protein uS4 (208 aa).

The segment at 30–49 (KSALEKRPYPPGQHGQRRSK) is disordered. Residues 98-161 (RRLDNVVYRM…KNNPQIQRSL (64 aa)) form the S4 RNA-binding domain.

The protein belongs to the universal ribosomal protein uS4 family. Part of the 30S ribosomal subunit. Contacts protein S5. The interaction surface between S4 and S5 is involved in control of translational fidelity.

Its function is as follows. One of the primary rRNA binding proteins, it binds directly to 16S rRNA where it nucleates assembly of the body of the 30S subunit. Functionally, with S5 and S12 plays an important role in translational accuracy. The sequence is that of Small ribosomal subunit protein uS4 from Nitratiruptor sp. (strain SB155-2).